We begin with the raw amino-acid sequence, 38 residues long: Large ribosomal subunit protein bL36 (38 aa).

This sequence belongs to the bacterial ribosomal protein bL36 family.

The protein is Large ribosomal subunit protein bL36 of Buchnera aphidicola subsp. Cinara cedri (strain Cc).